Reading from the N-terminus, the 396-residue chain is Probable sugar efflux transporter (396 aa).

Transmembrane regions (helical) follow at residues 15 to 35, 50 to 70, 81 to 101, 103 to 123, 136 to 156, 170 to 190, 209 to 229, 246 to 266, 275 to 295, 299 to 319, 333 to 353, and 364 to 384; these read VVTLAVAAFIFNTTEFVPVGL, VGIMLTIYAWVVALMSLPFML, LICLFVVFIASHVLSFLSWSF, VLVISRIGVAFAHAIFWSITA, AQALSLIATGTALAMVLGLPL, FFAIGIGALITLLCLIKLLPL, PALMSIYLLTVVVVTAHYTAY, FATALLLLLGGAGIIGSVIFG, ALVSTAIALLLVCLALLLPAA, IHLGVLSIFWGIAMMLIGLGM, VAMALFSGIFNIGIGAGALVG, and MIGYVGAVPAFAALIWSIIIF.

This sequence belongs to the major facilitator superfamily. SotB (TC 2.A.1.2) family.

It is found in the cell inner membrane. Involved in the efflux of sugars. The physiological role may be the reduction of the intracellular concentration of toxic sugars or sugar metabolites. The polypeptide is Probable sugar efflux transporter (Shigella boydii serotype 18 (strain CDC 3083-94 / BS512)).